A 274-amino-acid chain; its full sequence is MNEKHQIMQTEKNDGQNITELDFSGYPIEKEIKGFIHYFLILVNKNLSLSREIEMVKKNSLSDLESMKSFYNTNFGKGNSDLMSKVVVYFSNKIAQRSNNVISGYVDLEKEAKELLEKLNKLGIEASVGKTETLDSKKKLEILKNKKEYLQNEVKKSKGFFRSVFLFFFGDNKKNEFSEKICSIEKEMEKINENMKESEMEIFIQKTQNLMNCLTYATHYILDIKSNFHIMKLINHELLNNDFSLCCQDKELMNGIYSKTKDLLTNSNLKSLGQ.

Positions 99–206 form a coiled coil; sequence NNVISGYVDL…ESEMEIFIQK (108 aa).

This is an uncharacterized protein from Dictyostelium discoideum (Social amoeba).